A 157-amino-acid polypeptide reads, in one-letter code: GTP-dependent dephospho-CoA kinase (157 aa).

GTP contacts are provided by D40, D59, K61, E107, and D128.

This sequence belongs to the GTP-dependent DPCK family.

The enzyme catalyses 3'-dephospho-CoA + GTP = GDP + CoA + H(+). Its pathway is cofactor biosynthesis; coenzyme A biosynthesis. Catalyzes the GTP-dependent phosphorylation of the 3'-hydroxyl group of dephosphocoenzyme A to form coenzyme A (CoA). This Desulfurococcus amylolyticus (strain DSM 18924 / JCM 16383 / VKM B-2413 / 1221n) (Desulfurococcus kamchatkensis) protein is GTP-dependent dephospho-CoA kinase.